We begin with the raw amino-acid sequence, 131 residues long: Small ribosomal subunit protein uS8 (131 aa).

This sequence belongs to the universal ribosomal protein uS8 family. Part of the 30S ribosomal subunit. Contacts proteins S5 and S12.

In terms of biological role, one of the primary rRNA binding proteins, it binds directly to 16S rRNA central domain where it helps coordinate assembly of the platform of the 30S subunit. The sequence is that of Small ribosomal subunit protein uS8 from Acinetobacter baumannii (strain AB307-0294).